Here is a 648-residue protein sequence, read N- to C-terminus: UDP-galactose:fucoside alpha-3-galactosyltransferase (648 aa).

WD repeat units lie at residues 320–358 (NHTD…GNDT), 372–420 (HKRG…IQTF), 422–461 (GHTG…FKRV), 464–505 (GHNG…NIIK), 507–546 (NQGG…NFND), 556–595 (NENS…NNNN), and 617–648 (HLNS…SWDL).

Belongs to the glycosyltransferase 77 family. It depends on Mn(2+) as a cofactor.

It localises to the cytoplasm. The enzyme catalyses an alpha-L-fucosyl-(1-&gt;2)-beta-D-galactosyl derivative + UDP-alpha-D-galactose = an alpha-D-galactosyl-(1-&gt;3)-[alpha-L-fucosyl-(1-&gt;2)]-beta-D-galactosyl derivative + UDP + H(+). It functions in the pathway protein modification; protein glycosylation. Its activity is regulated as follows. Stimulated by dithiothreitol (DTT) in vitro. Totally inhibited by EDTA. In terms of biological role, specifically catalyzes the transfer of a galactosyl residue to the hydroxyproline-linked saccharide on Skp1 protein (fpaA/fpaB). Catalyzes the formation of a Gal-alpha-1,3-Fuc linkage, leading to Gal-Fuc-Gal-GlcNAc-HyPro143-Skp1. This is UDP-galactose:fucoside alpha-3-galactosyltransferase (agtA) from Dictyostelium discoideum (Social amoeba).